The primary structure comprises 196 residues: dITP/XTP pyrophosphatase (196 aa).

Residue 10 to 15 (SGNKGK) participates in substrate binding. Mg(2+) contacts are provided by Glu40 and Asp69. Asp69 serves as the catalytic Proton acceptor. Residues Ser70, 147 to 150 (FGYD), Lys170, and 175 to 176 (HR) each bind substrate.

The protein belongs to the HAM1 NTPase family. As to quaternary structure, homodimer. Mg(2+) is required as a cofactor.

The enzyme catalyses XTP + H2O = XMP + diphosphate + H(+). It carries out the reaction dITP + H2O = dIMP + diphosphate + H(+). The catalysed reaction is ITP + H2O = IMP + diphosphate + H(+). Pyrophosphatase that catalyzes the hydrolysis of nucleoside triphosphates to their monophosphate derivatives, with a high preference for the non-canonical purine nucleotides XTP (xanthosine triphosphate), dITP (deoxyinosine triphosphate) and ITP. Seems to function as a house-cleaning enzyme that removes non-canonical purine nucleotides from the nucleotide pool, thus preventing their incorporation into DNA/RNA and avoiding chromosomal lesions. This Prochlorococcus marinus (strain NATL1A) protein is dITP/XTP pyrophosphatase.